A 223-amino-acid chain; its full sequence is Ribosomal RNA small subunit methyltransferase G (223 aa).

S-adenosyl-L-methionine-binding positions include Gly-90, Leu-95, 141-142 (VE), and Arg-156.

Belongs to the methyltransferase superfamily. RNA methyltransferase RsmG family.

Its subcellular location is the cytoplasm. The enzyme catalyses guanosine(527) in 16S rRNA + S-adenosyl-L-methionine = N(7)-methylguanosine(527) in 16S rRNA + S-adenosyl-L-homocysteine. Functionally, specifically methylates the N7 position of guanine in position 527 of 16S rRNA. The protein is Ribosomal RNA small subunit methyltransferase G of Ralstonia nicotianae (strain ATCC BAA-1114 / GMI1000) (Ralstonia solanacearum).